Here is a 411-residue protein sequence, read N- to C-terminus: G1/S-specific cyclin pas1 (411 aa).

2 disordered regions span residues 210–253 and 307–326; these read LKNQ…PSVL and SLSKPVSLPPTPSSPKVGVY. A compositionally biased stretch (low complexity) spans 218–252; that stretch reads PSSSPQTTQDSSPILTMAPSTPVSVGSTPPSTPSV.

It belongs to the cyclin family.

In terms of biological role, essential for the control of the cell cycle at the G1/S (start) transition. Interacts with the pef1 protein kinase. The pef1/pas1 complex activates the res2/cdc10 complex. The chain is G1/S-specific cyclin pas1 (pas1) from Schizosaccharomyces pombe (strain 972 / ATCC 24843) (Fission yeast).